Reading from the N-terminus, the 44-residue chain is Defensin heliomicin (44 aa).

Cystine bridges form between Cys7/Cys32, Cys18/Cys40, and Cys22/Cys42.

The protein localises to the secreted. In terms of biological role, this peptide has potent anti-fungal activity. Has no activity against Gram-negative and Gram-positive bacteria. This chain is Defensin heliomicin, found in Heliothis virescens (Tobacco budworm moth).